The chain runs to 364 residues: Phosphoserine aminotransferase (364 aa).

R42 lines the L-glutamate pocket. Pyridoxal 5'-phosphate contacts are provided by residues 76 to 77, W102, T156, D175, and Q198; that span reads GR. Position 199 is an N6-(pyridoxal phosphate)lysine (K199). Residue 240–241 participates in pyridoxal 5'-phosphate binding; the sequence is NT.

The protein belongs to the class-V pyridoxal-phosphate-dependent aminotransferase family. SerC subfamily. Homodimer. Pyridoxal 5'-phosphate serves as cofactor.

Its subcellular location is the cytoplasm. It catalyses the reaction O-phospho-L-serine + 2-oxoglutarate = 3-phosphooxypyruvate + L-glutamate. It carries out the reaction 4-(phosphooxy)-L-threonine + 2-oxoglutarate = (R)-3-hydroxy-2-oxo-4-phosphooxybutanoate + L-glutamate. It participates in amino-acid biosynthesis; L-serine biosynthesis; L-serine from 3-phospho-D-glycerate: step 2/3. Its pathway is cofactor biosynthesis; pyridoxine 5'-phosphate biosynthesis; pyridoxine 5'-phosphate from D-erythrose 4-phosphate: step 3/5. Functionally, catalyzes the reversible conversion of 3-phosphohydroxypyruvate to phosphoserine and of 3-hydroxy-2-oxo-4-phosphonooxybutanoate to phosphohydroxythreonine. The sequence is that of Phosphoserine aminotransferase from Shewanella sediminis (strain HAW-EB3).